Consider the following 79-residue polypeptide: Small proline-rich protein 4 (79 aa).

The span at 1-26 (MSSQQQQRQQQQCPPQRAQQQQVKQP) shows a compositional bias: low complexity. Positions 1–79 (MSSQQQQRQQ…AQQASKSKQK (79 aa)) are disordered. Over residues 66-79 (KCPSAQQASKSKQK) the composition is skewed to polar residues.

The protein belongs to the cornifin (SPRR) family. Post-translationally, cross-linked to membrane proteins by transglutaminase.

Its subcellular location is the cytoplasm. It is found in the cell cortex. Its function is as follows. Cross-linked envelope protein of keratinocytes. Involved in UV-induced cornification. This is Small proline-rich protein 4 (SPRR4) from Homo sapiens (Human).